Here is a 657-residue protein sequence, read N- to C-terminus: UvrABC system protein B (657 aa).

Positions 23–414 constitute a Helicase ATP-binding domain; that stretch reads KSIKKGNKYQ…KENIFHQIMR (392 aa). 36–43 provides a ligand contact to ATP; sequence GVTGSGKT. The Beta-hairpin signature appears at 89–112; sequence YYDYYQPEAYIPRTDVFIEKDSST. A Helicase C-terminal domain is found at 431 to 593; sequence QVEILFDEAK…ITPTSVKRHI (163 aa). A UVR domain is found at 622-657; that stretch reads AKLVKELRKQMLEAAKALEFEKAAAIRDEINKLRDL.

The protein belongs to the UvrB family. As to quaternary structure, forms a heterotetramer with UvrA during the search for lesions. Interacts with UvrC in an incision complex.

Its subcellular location is the cytoplasm. Its function is as follows. The UvrABC repair system catalyzes the recognition and processing of DNA lesions. A damage recognition complex composed of 2 UvrA and 2 UvrB subunits scans DNA for abnormalities. Upon binding of the UvrA(2)B(2) complex to a putative damaged site, the DNA wraps around one UvrB monomer. DNA wrap is dependent on ATP binding by UvrB and probably causes local melting of the DNA helix, facilitating insertion of UvrB beta-hairpin between the DNA strands. Then UvrB probes one DNA strand for the presence of a lesion. If a lesion is found the UvrA subunits dissociate and the UvrB-DNA preincision complex is formed. This complex is subsequently bound by UvrC and the second UvrB is released. If no lesion is found, the DNA wraps around the other UvrB subunit that will check the other stand for damage. The polypeptide is UvrABC system protein B (Campylobacter jejuni subsp. jejuni serotype O:2 (strain ATCC 700819 / NCTC 11168)).